Consider the following 209-residue polypeptide: ATP-dependent Clp protease proteolytic subunit 1 (209 aa).

The active-site Nucleophile is Ser109. Residue His134 is part of the active site.

Belongs to the peptidase S14 family. As to quaternary structure, fourteen ClpP subunits assemble into 2 heptameric rings which stack back to back to give a disk-like structure with a central cavity, resembling the structure of eukaryotic proteasomes.

It localises to the cytoplasm. The enzyme catalyses Hydrolysis of proteins to small peptides in the presence of ATP and magnesium. alpha-casein is the usual test substrate. In the absence of ATP, only oligopeptides shorter than five residues are hydrolyzed (such as succinyl-Leu-Tyr-|-NHMec, and Leu-Tyr-Leu-|-Tyr-Trp, in which cleavage of the -Tyr-|-Leu- and -Tyr-|-Trp bonds also occurs).. Functionally, cleaves peptides in various proteins in a process that requires ATP hydrolysis. Has a chymotrypsin-like activity. Plays a major role in the degradation of misfolded proteins. This is ATP-dependent Clp protease proteolytic subunit 1 from Corynebacterium diphtheriae (strain ATCC 700971 / NCTC 13129 / Biotype gravis).